We begin with the raw amino-acid sequence, 242 residues long: Type III pantothenate kinase (242 aa).

Residue 5–12 (DLGNTRLK) participates in ATP binding. Substrate-binding positions include Y94 and 100 to 103 (GCDR). The active-site Proton acceptor is D102. Residue T124 participates in ATP binding. A substrate-binding site is contributed by T175.

This sequence belongs to the type III pantothenate kinase family. In terms of assembly, homodimer. NH4(+) serves as cofactor. The cofactor is K(+).

It is found in the cytoplasm. The catalysed reaction is (R)-pantothenate + ATP = (R)-4'-phosphopantothenate + ADP + H(+). It functions in the pathway cofactor biosynthesis; coenzyme A biosynthesis; CoA from (R)-pantothenate: step 1/5. Functionally, catalyzes the phosphorylation of pantothenate (Pan), the first step in CoA biosynthesis. In Psychrobacter cryohalolentis (strain ATCC BAA-1226 / DSM 17306 / VKM B-2378 / K5), this protein is Type III pantothenate kinase.